We begin with the raw amino-acid sequence, 386 residues long: Oxytocin receptor (386 aa).

Residues 1-31 (MEGVLAANWSAEAVNSSAAPPEAEGNRTAGP) form a disordered region. Over 1–38 (MEGVLAANWSAEAVNSSAAPPEAEGNRTAGPPQRNEAL) the chain is Extracellular. N-linked (GlcNAc...) asparagine glycans are attached at residues N8, N15, and N26. Residues 39 to 63 (ARVEVAVLCLILFLALSGNACVLLA) traverse the membrane as a helical segment. Topologically, residues 64-74 (LRTTRHKHSRL) are cytoplasmic. Residues 75–97 (FFFMKHLSIADLVVAVFQVLPQL) traverse the membrane as a helical segment. Topologically, residues 98 to 113 (LWDITFRFYGPDLLCR) are extracellular. A disulfide bridge links C112 with C187. The chain crosses the membrane as a helical span at residues 114–135 (LVKYLQVVGMFASTYLLLLMSL). Residues 136 to 154 (DRCLAICQPLRALRRPADR) are Cytoplasmic-facing. The helical transmembrane segment at 155-175 (LAVLATWLGCLVASAPQVHIF) threads the bilayer. Residues 176–202 (SLREVADGVFDCWAVFIQPWGPKAYIT) lie on the Extracellular side of the membrane. The helical transmembrane segment at 203–225 (WITLAVYIVPVIVLAACYGLISF) threads the bilayer. Residues 226–277 (KIWQNLRLKTAAEAAEAIAGTEGAAAGSRGRAALARVSSVKLISKAKIRTVK) are Cytoplasmic-facing. The helical transmembrane segment at 278–296 (MTFIIVLAFIVCWTPFFFV) threads the bilayer. The Extracellular portion of the chain corresponds to 297–311 (QMWSVWDADAPKEAS). The helical transmembrane segment at 312–334 (AFIIAMLLASLNSCCNPWIYMLF) threads the bilayer. The Cytoplasmic portion of the chain corresponds to 335 to 386 (TGHLFHELVQRFLCCSSSHLKTSRPGETSVSKKSNSSTFVLSQHSSSQKSCS). The span at 355 to 375 (KTSRPGETSVSKKSNSSTFVL) shows a compositional bias: polar residues. A disordered region spans residues 355-386 (KTSRPGETSVSKKSNSSTFVLSQHSSSQKSCS). A phosphoserine mark is found at S368 and S370. The segment covering 376–386 (SQHSSSQKSCS) has biased composition (low complexity).

This sequence belongs to the G-protein coupled receptor 1 family. Vasopressin/oxytocin receptor subfamily.

It localises to the cell membrane. In terms of biological role, receptor for oxytocin. The activity of this receptor is mediated by G proteins which activate a phosphatidylinositol-calcium second messenger system. The chain is Oxytocin receptor (OXTR) from Sus scrofa (Pig).